Consider the following 150-residue polypeptide: 1,4-dihydroxy-2-naphthoyl-CoA hydrolase (150 aa).

Asp19 is a catalytic residue.

Belongs to the 4-hydroxybenzoyl-CoA thioesterase family. DHNA-CoA hydrolase subfamily.

The catalysed reaction is 1,4-dihydroxy-2-naphthoyl-CoA + H2O = 1,4-dihydroxy-2-naphthoate + CoA + H(+). It participates in cofactor biosynthesis; phylloquinone biosynthesis. The protein operates within quinol/quinone metabolism; 1,4-dihydroxy-2-naphthoate biosynthesis; 1,4-dihydroxy-2-naphthoate from chorismate: step 7/7. In terms of biological role, catalyzes the hydrolysis of 1,4-dihydroxy-2-naphthoyl-CoA (DHNA-CoA) to 1,4-dihydroxy-2-naphthoate (DHNA), a reaction involved in phylloquinone (vitamin K1) biosynthesis. This Prochlorococcus marinus (strain MIT 9215) protein is 1,4-dihydroxy-2-naphthoyl-CoA hydrolase.